The primary structure comprises 368 residues: tRNA-specific 2-thiouridylase MnmA (368 aa).

ATP is bound by residues 12–19 and Met-38; that span reads GMSGGVDS. The interval 98–100 is interaction with target base in tRNA; sequence NPD. The active-site Nucleophile is Cys-103. Cys-103 and Cys-200 are oxidised to a cystine. Gly-128 lines the ATP pocket. The tract at residues 150-152 is interaction with tRNA; sequence KDQ. The Cysteine persulfide intermediate role is filled by Cys-200. The segment at 311–312 is interaction with tRNA; sequence RY.

This sequence belongs to the MnmA/TRMU family.

It is found in the cytoplasm. It carries out the reaction S-sulfanyl-L-cysteinyl-[protein] + uridine(34) in tRNA + AH2 + ATP = 2-thiouridine(34) in tRNA + L-cysteinyl-[protein] + A + AMP + diphosphate + H(+). Its function is as follows. Catalyzes the 2-thiolation of uridine at the wobble position (U34) of tRNA, leading to the formation of s(2)U34. This chain is tRNA-specific 2-thiouridylase MnmA, found in Aeromonas hydrophila subsp. hydrophila (strain ATCC 7966 / DSM 30187 / BCRC 13018 / CCUG 14551 / JCM 1027 / KCTC 2358 / NCIMB 9240 / NCTC 8049).